A 365-amino-acid polypeptide reads, in one-letter code: Flavone synthase (365 aa).

Fe cation contacts are provided by H76, H218, D220, and H276. The Fe2OG dioxygenase domain occupies M194–P295. Positions R345–A365 are disordered.

The protein belongs to the iron/ascorbate-dependent oxidoreductase family. Fe cation is required as a cofactor. Requires L-ascorbate as cofactor.

Its subcellular location is the cytoplasm. The enzyme catalyses a flavanone + 2-oxoglutarate + O2 = a flavone + succinate + CO2 + H2O. Its pathway is secondary metabolite biosynthesis; flavonoid biosynthesis. In terms of biological role, involved in the conversion of naringenin to apigenin. Acts via a direct 2,3-desaturation of flavanones instead of a sequential hydroxylation/dehydratation mechanism. The sequence is that of Flavone synthase (FNSI) from Petroselinum crispum (Parsley).